Here is a 123-residue protein sequence, read N- to C-terminus: MASLRIAPLALFFFLAASVMFTVEKTEAGIPCGESCVFIPCITGAIGCSCKSKVCYRDHVIAAEAKTMDDHHLLCQSHEDCITKGTGNFCASFPEQDIKYGWCFRAESEGFMLKDHLKMSVPN.

An N-terminal signal peptide occupies residues 1 to 28 (MASLRIAPLALFFFLAASVMFTVEKTEA). The segment at residues 29–58 (GIPCGESCVFIPCITGAIGCSCKSKVCYRD) is a cross-link (cyclopeptide (Gly-Asp)). 3 disulfide bridges follow: C32–C48, C36–C50, and C41–C55. A propeptide spans 59–123 (HVIAAEAKTM…KDHLKMSVPN (65 aa)) (removed in mature form).

In terms of processing, contains 3 disulfide bonds. Post-translationally, this is a cyclic peptide.

Functionally, probably participates in a plant defense mechanism. The protein is Cliotide T12 of Clitoria ternatea (Butterfly pea).